The chain runs to 391 residues: Phosphoglycerate kinase (391 aa).

Residues 21-23, arginine 36, 59-62, arginine 113, and arginine 146 contribute to the substrate site; these read DMN and HLGR. ATP-binding positions include lysine 197, glutamate 319, and 345 to 348; that span reads GGDT.

The protein belongs to the phosphoglycerate kinase family. Monomer.

The protein localises to the cytoplasm. The catalysed reaction is (2R)-3-phosphoglycerate + ATP = (2R)-3-phospho-glyceroyl phosphate + ADP. It participates in carbohydrate degradation; glycolysis; pyruvate from D-glyceraldehyde 3-phosphate: step 2/5. This chain is Phosphoglycerate kinase, found in Chromobacterium violaceum (strain ATCC 12472 / DSM 30191 / JCM 1249 / CCUG 213 / NBRC 12614 / NCIMB 9131 / NCTC 9757 / MK).